Here is a 130-residue protein sequence, read N- to C-terminus: Sulfurtransferase TusD (130 aa).

The Cysteine persulfide intermediate role is filled by cysteine 78.

The protein belongs to the DsrE/TusD family. As to quaternary structure, heterohexamer, formed by a dimer of trimers. The hexameric TusBCD complex contains 2 copies each of TusB, TusC and TusD. The TusBCD complex interacts with TusE.

It is found in the cytoplasm. Part of a sulfur-relay system required for 2-thiolation of 5-methylaminomethyl-2-thiouridine (mnm(5)s(2)U) at tRNA wobble positions. Accepts sulfur from TusA and transfers it in turn to TusE. This chain is Sulfurtransferase TusD, found in Buchnera aphidicola subsp. Baizongia pistaciae (strain Bp).